The sequence spans 109 residues: Nucleoid-associated protein Swoo_1794 (109 aa).

The disordered stretch occupies residues 88-109 (QKDKMAEVTGGMQLPPGMKMPF).

It belongs to the YbaB/EbfC family. In terms of assembly, homodimer.

The protein resides in the cytoplasm. It localises to the nucleoid. Its function is as follows. Binds to DNA and alters its conformation. May be involved in regulation of gene expression, nucleoid organization and DNA protection. This Shewanella woodyi (strain ATCC 51908 / MS32) protein is Nucleoid-associated protein Swoo_1794.